Reading from the N-terminus, the 1914-residue chain is Zinc finger protein Rlf (1914 aa).

Ser-41 bears the Phosphoserine mark. Basic and acidic residues predominate over residues 521–540 (KQYRRRDLTDQHKEKRDKKP). A disordered region spans residues 521–541 (KQYRRRDLTDQHKEKRDKKPI). A C2H2-type 1 zinc finger spans residues 582–604 (YTCPVCIKKFKRKEMFVPHVMEH). Lys-622 participates in a covalent cross-link: Glycyl lysine isopeptide (Lys-Gly) (interchain with G-Cter in SUMO2). Phosphoserine is present on residues Ser-632 and Ser-634. 5 consecutive C2H2-type zinc fingers follow at residues 671–696 (YPCP…KAEH), 714–736 (EKCT…EQVH), 742–766 (YMCV…KQKH), 771–795 (YKCE…EAQH), and 801–825 (YTCN…LSMH). Lys-839 participates in a covalent cross-link: Glycyl lysine isopeptide (Lys-Gly) (interchain with G-Cter in SUMO2). The disordered stretch occupies residues 882 to 907 (TETAENLKENSDSNSSDQLSHSSSAS). A compositionally biased stretch (low complexity) spans 893–907 (DSNSSDQLSHSSSAS). The segment at 954-979 (FTCGFDGCGSTYKNARGMQKHLRKVH) adopts a C2H2-type 7 zinc-finger fold. The segment at 993-1028 (LFPSLGNEHNQTTEKLDAEPKPCSDTNSDSPDEGLD) is disordered. Basic and acidic residues predominate over residues 1003-1014 (QTTEKLDAEPKP). 2 C2H2-type zinc fingers span residues 1127–1152 (FFCE…LKKH) and 1172–1195 (FQCH…KNKH). The disordered stretch occupies residues 1231-1290 (LGGDPSSNSEKPHCHPKKDECSSETDLESSCEETESKTSDISSPIGSHREEQEGREGRGS). Residues 1240–1251 (EKPHCHPKKDEC) are compositionally biased toward basic and acidic residues. Over residues 1252–1263 (SSETDLESSCEE) the composition is skewed to acidic residues. The span at 1277–1289 (SHREEQEGREGRG) shows a compositional bias: basic and acidic residues. C2H2-type zinc fingers lie at residues 1310-1335 (FHCI…RTVH), 1362-1387 (FACK…SDSH), 1407-1432 (FSCN…MEQH), 1444-1469 (IHCD…YYRH), and 1549-1574 (YPCM…KRTH). Residue Lys-1423 forms a Glycyl lysine isopeptide (Lys-Gly) (interchain with G-Cter in SUMO2) linkage. Residues Lys-1599 and Lys-1611 each participate in a glycyl lysine isopeptide (Lys-Gly) (interchain with G-Cter in SUMO2) cross-link. A disordered region spans residues 1620–1654 (SERTEHSHSPGDSSAPIQNTDCCHSSERDGGQKGC). The span at 1629 to 1642 (PGDSSAPIQNTDCC) shows a compositional bias: polar residues. Lys-1696 is covalently cross-linked (Glycyl lysine isopeptide (Lys-Gly) (interchain with G-Cter in SUMO2)). Residues 1725–1757 (ESETRQHSSGQENTVKNPTHVPKENFRKHSQPR) are disordered. A compositionally biased stretch (polar residues) spans 1731–1741 (HSSGQENTVKN). A Glycyl lysine isopeptide (Lys-Gly) (interchain with G-Cter in SUMO2) cross-link involves residue Lys-1762. Residues 1783–1807 (KEDDFDDWEPSEHLTLSNSSQSSND) form a disordered region. Residues 1796–1807 (LTLSNSSQSSND) are compositionally biased toward polar residues.

Belongs to the krueppel C2H2-type zinc-finger protein family. In terms of assembly, interacts with RIT1 and RIT2. In terms of tissue distribution, widely expressed in fetal and adult tissues.

The protein localises to the nucleus. Functionally, may be involved in transcriptional regulation. In Homo sapiens (Human), this protein is Zinc finger protein Rlf (RLF).